The sequence spans 322 residues: Gas vesicle protein L (322 aa).

The tract at residues 1 to 85 (MTEQSSGSAT…SEQATVDWST (85 aa)) is disordered. Residues 17 to 36 (ETAKQETGRKNEQPEERTVT) are compositionally biased toward basic and acidic residues. Over residues 45–57 (INTTTAESETGSE) the composition is skewed to polar residues. Positions 58-72 (QESKAGSEQESKAGS) are enriched in basic and acidic residues. The span at 73–85 (EQESEQATVDWST) shows a compositional bias: polar residues.

It belongs to the gas vesicle GvpF/GvpL family. GvpF to GvpM interact with each other in vitro, and may form multi-subunit complex(es). Interacts with GvpC, GvpN and GvpO.

The protein resides in the gas vesicle. Its function is as follows. Proteins GvpF to GvpM might be involved in nucleating gas vesicle formation. A minor component of the gas vesicle. Gas vesicles are small, hollow, gas filled protein structures that are found in several microbial planktonic microorganisms. They allow positioning of halobacteria at the optimal depth for growth in the poorly aerated, shallow brine pools of their habitat. Expression of a 9.5 kb mc-vac DNA fragment containing 2 divergently transcribed regions (gvpD-gvpE-gvpF-gvpG-gvpH-gvpI-gvpJ-gvpK-gvpL-gvpM and gvpA-gvpC-gvpN-gvpO) allows H.volcanii to produce gas vesicles. This chain is Gas vesicle protein L, found in Haloferax mediterranei (strain ATCC 33500 / DSM 1411 / JCM 8866 / NBRC 14739 / NCIMB 2177 / R-4) (Halobacterium mediterranei).